We begin with the raw amino-acid sequence, 405 residues long: Arginine biosynthesis bifunctional protein ArgJ (405 aa).

Residues T152, K178, T189, E276, N400, and T405 each contribute to the substrate site. Catalysis depends on T189, which acts as the Nucleophile.

Belongs to the ArgJ family. As to quaternary structure, heterotetramer of two alpha and two beta chains.

The protein localises to the cytoplasm. The catalysed reaction is N(2)-acetyl-L-ornithine + L-glutamate = N-acetyl-L-glutamate + L-ornithine. It catalyses the reaction L-glutamate + acetyl-CoA = N-acetyl-L-glutamate + CoA + H(+). It functions in the pathway amino-acid biosynthesis; L-arginine biosynthesis; L-ornithine and N-acetyl-L-glutamate from L-glutamate and N(2)-acetyl-L-ornithine (cyclic): step 1/1. Its pathway is amino-acid biosynthesis; L-arginine biosynthesis; N(2)-acetyl-L-ornithine from L-glutamate: step 1/4. Catalyzes two activities which are involved in the cyclic version of arginine biosynthesis: the synthesis of N-acetylglutamate from glutamate and acetyl-CoA as the acetyl donor, and of ornithine by transacetylation between N(2)-acetylornithine and glutamate. This is Arginine biosynthesis bifunctional protein ArgJ from Pseudomonas fluorescens (strain ATCC BAA-477 / NRRL B-23932 / Pf-5).